The sequence spans 339 residues: Ribosomal RNA small subunit methyltransferase C (339 aa).

This sequence belongs to the methyltransferase superfamily. RsmC family. Monomer.

It is found in the cytoplasm. The enzyme catalyses guanosine(1207) in 16S rRNA + S-adenosyl-L-methionine = N(2)-methylguanosine(1207) in 16S rRNA + S-adenosyl-L-homocysteine + H(+). Functionally, specifically methylates the guanine in position 1207 of 16S rRNA in the 30S particle. The chain is Ribosomal RNA small subunit methyltransferase C from Photobacterium profundum (strain SS9).